The sequence spans 21 residues: MKPALRDFIAIVQERLASVTA.

Possible increased expression of this protein (due to mutations upstream of the start codon) is proposed to be responsible for resistance to 3-hydroxypropionic acid (3-HP). This Escherichia coli (strain K12) protein is Protein IroK (iroK).